The following is an 82-amino-acid chain: Turripeptide IX-04 (82 aa).

An N-terminal signal peptide occupies residues 1–21; that stretch reads MGFYMLLTVALLLTSLMNVEA. Residues 22-39 constitute a propeptide that is removed on maturation; the sequence is TPVDQAERSALEKSGLGN. 3 disulfide bridges follow: Cys48–Cys70, Cys55–Cys74, and Cys60–Cys81.

Expressed by the venom duct.

The protein localises to the secreted. The polypeptide is Turripeptide IX-04 (Gemmula speciosa (Splendid gem-turris)).